Consider the following 538-residue polypeptide: Nicotinate phosphoribosyltransferase (538 aa).

The nicotinate site is built by Y21 and T210. A Phosphohistidine modification is found at H213. R318 is a binding site for nicotinate. T380 provides a ligand contact to 5-phospho-alpha-D-ribose 1-diphosphate.

The protein belongs to the NAPRTase family. In terms of assembly, homodimer. Requires Mg(2+) as cofactor. It depends on Mn(2+) as a cofactor. In terms of processing, transiently phosphorylated on a His residue during the reaction cycle. Phosphorylation strongly increases the affinity for substrates and increases the rate of nicotinate D-ribonucleotide production. Dephosphorylation regenerates the low-affinity form of the enzyme, leading to product release.

Its subcellular location is the cytoplasm. The protein resides in the cytosol. The enzyme catalyses nicotinate + 5-phospho-alpha-D-ribose 1-diphosphate + ATP + H2O = nicotinate beta-D-ribonucleotide + ADP + phosphate + diphosphate. It participates in cofactor biosynthesis; NAD(+) biosynthesis; nicotinate D-ribonucleotide from nicotinate: step 1/1. Functionally, catalyzes the first step in the biosynthesis of NAD from nicotinic acid, the ATP-dependent synthesis of beta-nicotinate D-ribonucleotide from nicotinate and 5-phospho-D-ribose 1-phosphate. Helps prevent cellular oxidative stress via its role in NAD biosynthesis. The protein is Nicotinate phosphoribosyltransferase (Naprt) of Rattus norvegicus (Rat).